A 300-amino-acid chain; its full sequence is Cation-efflux pump FieF (300 aa).

4 helical membrane passes run 12–32 (AAIA…FAWW), 39–59 (ILAA…NLLV), 82–102 (AALA…LTGI), and 114–134 (PGVG…LVSF). Asp-45 and Asp-49 together coordinate Zn(2+). Positions 153 and 157 each coordinate Zn(2+). 2 helical membrane passes run 156 to 176 (SDVM…YGWH) and 178 to 198 (ADAL…LRMG).

The protein belongs to the cation diffusion facilitator (CDF) transporter (TC 2.A.4) family. FieF subfamily. As to quaternary structure, homodimer.

Its subcellular location is the cell inner membrane. The catalysed reaction is Zn(2+)(in) + H(+)(out) = Zn(2+)(out) + H(+)(in). The enzyme catalyses Cd(2+)(in) + H(+)(out) = Cd(2+)(out) + H(+)(in). It catalyses the reaction Fe(2+)(in) + H(+)(out) = Fe(2+)(out) + H(+)(in). Divalent metal cation transporter which exports Zn(2+), Cd(2+) and possibly Fe(2+). May be involved in zinc and iron detoxification by efflux. The chain is Cation-efflux pump FieF from Escherichia coli O157:H7 (strain EC4115 / EHEC).